Here is a 209-residue protein sequence, read N- to C-terminus: uncharacterized protein (209 aa).

The segment covering 1-15 (MHRIDTKTAQKDKFG) has biased composition (basic and acidic residues). Positions 1-34 (MHRIDTKTAQKDKFGAGKNGFTRGNPQTGTPATD) are disordered. A compositionally biased stretch (polar residues) spans 22–31 (TRGNPQTGTP).

This sequence to E.coli YfdL and M.jannaschii MJ0347.

This is an uncharacterized protein from Escherichia coli (strain K12).